A 249-amino-acid polypeptide reads, in one-letter code: ATP-dependent dethiobiotin synthetase BioD (249 aa).

11 to 16 is a binding site for ATP; it reads NVGKTI. T15 is a binding site for Mg(2+). K31 is an active-site residue. T35 is a substrate binding site. Residues D40, 127–130, 188–189, and 215–217 contribute to the ATP site; these read EGAG, NS, and PYL. Mg(2+)-binding residues include D40 and E127.

It belongs to the dethiobiotin synthetase family. Homodimer. Mg(2+) serves as cofactor.

It is found in the cytoplasm. It catalyses the reaction (7R,8S)-7,8-diammoniononanoate + CO2 + ATP = (4R,5S)-dethiobiotin + ADP + phosphate + 3 H(+). The protein operates within cofactor biosynthesis; biotin biosynthesis; biotin from 7,8-diaminononanoate: step 1/2. Catalyzes a mechanistically unusual reaction, the ATP-dependent insertion of CO2 between the N7 and N8 nitrogen atoms of 7,8-diaminopelargonic acid (DAPA, also called 7,8-diammoniononanoate) to form a ureido ring. The chain is ATP-dependent dethiobiotin synthetase BioD from Neorickettsia sennetsu (strain ATCC VR-367 / Miyayama) (Ehrlichia sennetsu).